Reading from the N-terminus, the 556-residue chain is Zinc finger protein GLI1 (556 aa).

Disordered regions lie at residues 57 to 83 (TEHP…KKRA), 133 to 178 (SLGY…TPAR), and 200 to 222 (KYPE…QDPL). Residues 135-148 (GYQNPPGQQKGQGQ) are compositionally biased toward low complexity. 5 C2H2-type zinc fingers span residues 247–272 (TNCY…NNEH), 280–307 (FVCH…MRRH), 313–337 (HKCT…LRSH), 343–368 (YVCE…NRTH), and 374–399 (YICK…KTVH). The segment at 295 to 303 (KAQYMLVVH) is interaction with DNA. 2 interaction with DNA regions span residues 357–362 (ASDRAK) and 387–393 (DPSSLRK). The segment at 387 to 492 (DPSSLRKHVK…VEMTGNTGGS (106 aa)) is disordered. Residues 454 to 472 (SKPQPSPGGQSSCSSDRSP) are compositionally biased toward low complexity.

This sequence belongs to the GLI C2H2-type zinc-finger protein family.

The protein localises to the cytoplasm. It localises to the nucleus. Functionally, acts as a transcriptional activator. Binds to the DNA consensus sequence 5'-GACCACCCA-3'. May regulate the transcription of specific genes during normal development. May play a role in craniofacial development and digital development, as well as development of the central nervous system and gastrointestinal tract. Mediates SHH signaling. Plays a role in cell proliferation and differentiation via its role in SHH signaling. This Gallus gallus (Chicken) protein is Zinc finger protein GLI1 (GLI1).